Consider the following 364-residue polypeptide: MPLLLLLPLLWAGALAMDPNFWLQVQESVTVQEGLCVLVPCTFFHPIPYYDKNSPVHGYWFREGAIISRDSPVATNKLDQEVQEETQGRFRLLGDPSRNNCSLSIVDARRRDNGSYFFRMERGSTKYSYKSPQLSVHVTDLTHRPKILIPGTLEPGHSKNLTCSVSWACEQGTPPIFSWLSAAPTSLGPRTTHSSVLIITPRPQDHGTNLTCQVKFAGAGVTTERTIQLNVTYVPQNPTTGIFPGDGSGKQETRAGVVHGAIGGAGVTALLALCLCLIFFIVKTHRRKAARTAVGRNDTHPTTGSASPKHQKKSKLHGPTETSSCSGAAPTVEMDEELHYASLNFHGMNPSKDTSTEYSEVRTQ.

The first 17 residues, 1-17 (MPLLLLLPLLWAGALAM), serve as a signal peptide directing secretion. At 18–259 (DPNFWLQVQE…KQETRAGVVH (242 aa)) the chain is on the extracellular side. Positions 19-135 (PNFWLQVQES…KYSYKSPQLS (117 aa)) constitute an Ig-like V-type domain. Intrachain disulfides connect Cys-36/Cys-169, Cys-41/Cys-101, and Cys-163/Cys-212. Residues Asn-100 and Asn-113 are each glycosylated (N-linked (GlcNAc...) asparagine). Arg-119 serves as a coordination point for N-acetylneuraminate. The region spanning 145-228 (PKILIPGTLE…AGVTTERTIQ (84 aa)) is the Ig-like C2-type domain. D-galactose is bound at residue Glu-154. N-linked (GlcNAc...) asparagine glycosylation is found at Asn-160, Asn-209, and Asn-230. A helical transmembrane segment spans residues 260–282 (GAIGGAGVTALLALCLCLIFFIV). The Cytoplasmic portion of the chain corresponds to 283–364 (KTHRRKAART…STEYSEVRTQ (82 aa)). A disordered region spans residues 290 to 364 (ARTAVGRNDT…STEYSEVRTQ (75 aa)). 2 consecutive short sequence motifs (ITIM motif) follow at residues 338-343 (LHYASL) and 356-361 (TEYSEV). 2 positions are modified to phosphotyrosine; by LCK: Tyr-340 and Tyr-358.

It belongs to the immunoglobulin superfamily. SIGLEC (sialic acid binding Ig-like lectin) family. As to quaternary structure, homodimer; disulfide-linked. Interacts with PTPN6/SHP-1 and PTPN11/SHP-2 upon phosphorylation. Interacts with C1QA (via C-terminus); this interaction activates CD33 inhibitory motifs. Glycosylated. Glycosylation at Asn-100 is critical for regulating ligand recognition. In terms of processing, phosphorylation of Tyr-340 is involved in binding to PTPN6 and PTPN11. Phosphorylation of Tyr-358 is involved in binding to PTPN6. LCK phosphorylates Tyr-340 efficiently and Tyr-358 to a lesser extent. Monocytic/myeloid lineage cells. In the brain, CD33 is mainly expressed on microglial cells.

The protein localises to the cell membrane. The protein resides in the peroxisome. Functionally, sialic-acid-binding immunoglobulin-like lectin (Siglec) that plays a role in mediating cell-cell interactions and in maintaining immune cells in a resting state. Preferentially recognizes and binds alpha-2,3- and more avidly alpha-2,6-linked sialic acid-bearing glycans. Upon engagement of ligands such as C1q or syalylated glycoproteins, two immunoreceptor tyrosine-based inhibitory motifs (ITIMs) located in CD33 cytoplasmic tail are phosphorylated by Src-like kinases such as LCK. These phosphorylations provide docking sites for the recruitment and activation of protein-tyrosine phosphatases PTPN6/SHP-1 and PTPN11/SHP-2. In turn, these phosphatases regulate downstream pathways through dephosphorylation of signaling molecules. One of the repressive effect of CD33 on monocyte activation requires phosphoinositide 3-kinase/PI3K. The protein is Myeloid cell surface antigen CD33 (CD33) of Homo sapiens (Human).